We begin with the raw amino-acid sequence, 225 residues long: U2 small nuclear ribonucleoprotein B'' (225 aa).

An RRM 1 domain is found at 7–86 (HTIYINNMND…KPMRIQYAKT (80 aa)). The segment at 99–145 (ADKEKKKEKKKAKTVEQTATTTNKKPGQGTPNSANTQGNSTPNPQVP) is disordered. K111 carries the post-translational modification N6-acetyllysine; alternate. A Glycyl lysine isopeptide (Lys-Gly) (interchain with G-Cter in SUMO2); alternate cross-link involves residue K111. The segment covering 113–123 (VEQTATTTNKK) has biased composition (low complexity). Positions 127–141 (GTPNSANTQGNSTPN) are enriched in polar residues. Y151 is subject to Phosphotyrosine. Positions 151-225 (YILFLNNLPE…HAMKITYAKK (75 aa)) constitute an RRM 2 domain.

Belongs to the RRM U1 A/B'' family. Identified in the spliceosome B complex. Identified in the spliceosome C complex. Present in a spliceosome complex assembled in vitro, and composed of SNRPB2, HPRP8BP and CRNKL1. Contributes to the binding of stem loop IV of U2 snRNA with SNRPP1.

It is found in the nucleus. Involved in pre-mRNA splicing as component of the spliceosome. Associated with sn-RNP U2, where it contributes to the binding of stem loop IV of U2 snRNA. In Homo sapiens (Human), this protein is U2 small nuclear ribonucleoprotein B'' (SNRPB2).